A 901-amino-acid polypeptide reads, in one-letter code: HTH-type transcriptional regulator MalT (901 aa).

39–46 lines the ATP pocket; that stretch reads SPAGYGKT. The region spanning 829 to 894 is the HTH luxR-type domain; the sequence is ELIRTSPLTQ…DAVQHAQQLL (66 aa). Residues 853–872 constitute a DNA-binding region (H-T-H motif); the sequence is NDQIAGELDVAATTIKTHIR.

The protein belongs to the MalT family. Monomer in solution. Oligomerizes to an active state in the presence of the positive effectors ATP and maltotriose.

Its activity is regulated as follows. Activated by ATP and maltotriose, which are both required for DNA binding. Its function is as follows. Positively regulates the transcription of the maltose regulon whose gene products are responsible for uptake and catabolism of malto-oligosaccharides. Specifically binds to the promoter region of its target genes, recognizing a short DNA motif called the MalT box. The polypeptide is HTH-type transcriptional regulator MalT (Cronobacter sakazakii (strain ATCC BAA-894) (Enterobacter sakazakii)).